Here is a 365-residue protein sequence, read N- to C-terminus: Chorismate synthase (365 aa).

Position 47 (R47) interacts with NADP(+). FMN-binding positions include 124 to 126, G287, 302 to 306, and R328; these read RAS and KPTAT.

Belongs to the chorismate synthase family. In terms of assembly, homotetramer. Requires FMNH2 as cofactor.

It catalyses the reaction 5-O-(1-carboxyvinyl)-3-phosphoshikimate = chorismate + phosphate. It participates in metabolic intermediate biosynthesis; chorismate biosynthesis; chorismate from D-erythrose 4-phosphate and phosphoenolpyruvate: step 7/7. Functionally, catalyzes the anti-1,4-elimination of the C-3 phosphate and the C-6 proR hydrogen from 5-enolpyruvylshikimate-3-phosphate (EPSP) to yield chorismate, which is the branch point compound that serves as the starting substrate for the three terminal pathways of aromatic amino acid biosynthesis. This reaction introduces a second double bond into the aromatic ring system. This is Chorismate synthase from Prochlorococcus marinus (strain MIT 9312).